Reading from the N-terminus, the 91-residue chain is MAHKKGVGSSRNGRDSNPKMRGVKRFGGELVRAGNIIVRQCGTKIKPGANVGVGRDWTLYALVDGVVQFSHYSRTQKKVSVIPVAAETTAN.

Residues 1–24 (MAHKKGVGSSRNGRDSNPKMRGVK) form a disordered region.

The protein belongs to the bacterial ribosomal protein bL27 family.

The protein is Large ribosomal subunit protein bL27 of Chloroflexus aggregans (strain MD-66 / DSM 9485).